The following is a 413-amino-acid chain: MTSSRVENSSSRAARKVKLALMGPAFVAAIGYIDPGNFATNIQAGASFGYQLLWVVVWANLMAMLIQVLSAKLGIATGKNLAEQIRDHYPRPVVWFYWVQAEIIAMATDLAEFIGAAIGFKLVLGVSLLQGAVLTGVATFLILMLQRRGQKPLEKVIGGLLLFVAVAYVVELIFSQPALAPLTKGLVIPTLPNGEAVFLAAGVLGATIMPHVIYLHSSLTQHLHGGTRKERYNATRWDVAIAMTIAGFVNLAMMATAAAAFHFNGHTGVADLDQAYMTLEPLLSHAAATIFGLSLIAAGLSSTVVGTLAGQVVMQGFIRFHIPLWFRRAITMLPSFVVILLGLDPTRILVMSQVLLSFGIALALVPLLIFTSNAKLMGDLVNTRWVRGIGWAIVAIVVSLNGWLIVGSLLGVD.

Transmembrane regions (helical) follow at residues 19 to 39 (LALM…GNFA), 46 to 66 (ASFG…AMLI), 94 to 114 (VWFY…AEFI), 122 to 142 (LVLG…TFLI), 156 to 176 (VIGG…IFSQ), 196 to 216 (AVFL…IYLH), 241 to 261 (IAMT…AAAF), 290 to 310 (IFGL…TLAG), 329 to 349 (AITM…TRIL), 350 to 370 (VMSQ…LLIF), and 389 to 409 (IGWA…VGSL).

The protein belongs to the NRAMP family.

Its subcellular location is the cell inner membrane. In terms of biological role, h(+)-stimulated, divalent metal cation uptake system. This Klebsiella pneumoniae subsp. pneumoniae (strain ATCC 700721 / MGH 78578) protein is Divalent metal cation transporter MntH.